We begin with the raw amino-acid sequence, 488 residues long: ATP synthase subunit beta (488 aa).

An ATP-binding site is contributed by Gly-164–Thr-171.

The protein belongs to the ATPase alpha/beta chains family. As to quaternary structure, F-type ATPases have 2 components, CF(1) - the catalytic core - and CF(0) - the membrane proton channel. CF(1) has five subunits: alpha(3), beta(3), gamma(1), delta(1), epsilon(1). CF(0) has four main subunits: a(1), b(1), b'(1) and c(9-12).

It localises to the cellular thylakoid membrane. It carries out the reaction ATP + H2O + 4 H(+)(in) = ADP + phosphate + 5 H(+)(out). Produces ATP from ADP in the presence of a proton gradient across the membrane. The catalytic sites are hosted primarily by the beta subunits. The chain is ATP synthase subunit beta from Synechococcus sp. (strain RCC307).